The sequence spans 205 residues: MIDPDGFRPNVGIVLMRQDGQVFWARRVRRDGWQFPQGGMNTDETPVEAMYRELREETGLLPEHVELLGATPGWLRYRLPSRAVRRNERQVCIGQKQVWFLLQFTGDESHLKLDHTDTPEFDHWRWVDFWYPVEHVVMFKRGVYARALRHLAPLAQSLAGPAAVGAMPERALEAWLPGSSAAGHDSPRKRPRKRNGARAMRINND.

The 144-residue stretch at 6 to 149 (GFRPNVGIVL…KRGVYARALR (144 aa)) folds into the Nudix hydrolase domain. The Nudix box signature appears at 38–59 (GGMNTDETPVEAMYRELREETG). A disordered region spans residues 178 to 205 (GSSAAGHDSPRKRPRKRNGARAMRINND). Basic residues predominate over residues 187–196 (PRKRPRKRNG).

This sequence belongs to the Nudix hydrolase family. RppH subfamily. The cofactor is a divalent metal cation.

Its function is as follows. Accelerates the degradation of transcripts by removing pyrophosphate from the 5'-end of triphosphorylated RNA, leading to a more labile monophosphorylated state that can stimulate subsequent ribonuclease cleavage. This chain is RNA pyrophosphohydrolase, found in Xanthomonas axonopodis pv. citri (strain 306).